The primary structure comprises 517 residues: Ribonuclease Y (517 aa).

The chain crosses the membrane as a helical span at residues 1–21; that stretch reads MIEVVVGIGAGLIGIGAGYLV. The KH domain occupies 207 to 273; it reads LINVVNIKND…TRVIELLVED (67 aa). In terms of domain architecture, HD spans 333–426; that stretch reads ALAHSLEVAH…VCAADALSAA (94 aa).

Belongs to the RNase Y family.

It is found in the cell membrane. Functionally, endoribonuclease that initiates mRNA decay. The polypeptide is Ribonuclease Y (Campylobacter fetus subsp. fetus (strain 82-40)).